The sequence spans 350 residues: uncharacterized protein (350 aa).

Positions 164–327 (NDPLPGYVEV…EKTRIGARVV (164 aa)) constitute an Integrase catalytic domain.

This is an uncharacterized protein from Sinorhizobium fredii (strain NBRC 101917 / NGR234).